The sequence spans 611 residues: Protein decapping 5 (611 aa).

The Sm domain occupies Lys9–Pro92. 6 disordered regions span residues His111–Leu153, Gly183–Leu238, Ser264–Pro301, Glu318–Lys362, Gln396–Ser455, and Phe519–Thr611. Composition is skewed to polar residues over residues Pro117–Pro140 and Asn203–Phe214. The segment covering Ser264–Ser281 has biased composition (low complexity). Composition is skewed to polar residues over residues Glu318–Ser330, Gln396–Ala413, and Ala424–Asn437. Residues Tyr441–Gly453 show a composition bias toward basic residues. A DFDF domain is found at Gly453–Leu489. Residues Pro512–Thr527 carry the FFD box motif. Residues Ile528 to Thr547 show a composition bias toward basic and acidic residues. The short motif at Asn534 to Ser554 is the TFG box element. The segment covering Gly559–Arg604 has biased composition (gly residues).

The protein belongs to the LSM14 family. As to quaternary structure, homodimer. Component of the decapping complex. Interacts with DCP1 and DCP2.

Its subcellular location is the cytoplasm. It localises to the P-body. In terms of biological role, as a component of the decapping complex, involved in the degradation of mRNAs. Promotes P-body formation. Translational repressor. The polypeptide is Protein decapping 5 (DCP5) (Arabidopsis thaliana (Mouse-ear cress)).